A 272-amino-acid polypeptide reads, in one-letter code: MAIPAALPPLPFNPTRVRSYMLRLPLFTRLVLLVILAFWLLELQTIWSVVQWGSLTPNEIGIGSMYRLNTYPFIHVGFFHAFVNLLALTPLLERFEAEHGTLTAVALFIGPLSTFPAGIYILVEKFILRSNTAVVGASVWIFLLLGSEAIKTFKSNPYFSLGTTKIPTWTSPLFACALVSIFVPNTSFLGHLSAIIIGYLLGLGYLKVFVPPEKILRWIEGKLNLLGRLPHYVSVDQKTYGRYGVLPTATAAVGGERPTPLSYLGTNQRLGP.

The next 6 helical transmembrane spans lie at 30–50, 72–92, 103–123, 133–153, 164–184, and 186–206; these read LVLLVILAFWLLELQTIWSVV, PFIHVGFFHAFVNLLALTPLL, TAVALFIGPLSTFPAGIYILV, AVVGASVWIFLLLGSEAIKTF, TKIPTWTSPLFACALVSIFVP, and TSFLGHLSAIIIGYLLGLGYL. Residue S138 is the Nucleophile of the active site. H191 is an active-site residue.

It belongs to the peptidase S54 family.

The protein localises to the membrane. It catalyses the reaction Cleaves type-1 transmembrane domains using a catalytic dyad composed of serine and histidine that are contributed by different transmembrane domains.. In terms of biological role, rhomboid protease that catalyzes intramembrane proteolysis. Required for transcription factor srbA activation by mediating its release from the membrane and thereby regulating its activity under hypoxic conditions. Essential for iron homeostasis and resistance to azoles such as voriconazole. Required for virulence in murine models of invasive pulmonary aspergillosis (IPA). This Aspergillus fumigatus (strain ATCC MYA-4609 / CBS 101355 / FGSC A1100 / Af293) (Neosartorya fumigata) protein is Rhomboid-type serine protease B.